We begin with the raw amino-acid sequence, 338 residues long: Tryptophan--tRNA ligase (338 aa).

ATP contacts are provided by residues Gln-11–Ser-13 and Gly-19–Asn-20. The 'HIGH' region signature appears at Pro-12–Asn-20. Asp-135 contributes to the L-tryptophan binding site. Residues Gly-147–Asp-149, Val-189, and Lys-198–Ser-202 contribute to the ATP site. The 'KMSKS' region signature appears at Lys-198–Ser-202.

It belongs to the class-I aminoacyl-tRNA synthetase family. In terms of assembly, homodimer.

Its subcellular location is the cytoplasm. It carries out the reaction tRNA(Trp) + L-tryptophan + ATP = L-tryptophyl-tRNA(Trp) + AMP + diphosphate + H(+). In terms of biological role, catalyzes the attachment of tryptophan to tRNA(Trp). This chain is Tryptophan--tRNA ligase, found in Vibrio parahaemolyticus serotype O3:K6 (strain RIMD 2210633).